A 539-amino-acid chain; its full sequence is CTP synthase (539 aa).

The segment at 1-268 (MADTKYIFVT…DETVLRKVGL (268 aa)) is amidoligase domain. A CTP-binding site is contributed by Ser-15. Ser-15 lines the UTP pocket. 16–21 (SLGKGI) serves as a coordination point for ATP. Tyr-56 serves as a coordination point for L-glutamine. Position 73 (Asp-73) interacts with ATP. Mg(2+) contacts are provided by Asp-73 and Glu-143. Residues 150–152 (DIE), 189–194 (KTKPTQ), and Lys-225 contribute to the CTP site. Residues 189–194 (KTKPTQ) and Lys-225 each bind UTP. Residues 294–536 (TIALVGKYVE…IREAIKTRKK (243 aa)) enclose the Glutamine amidotransferase type-1 domain. Gly-356 is an L-glutamine binding site. The active-site Nucleophile; for glutamine hydrolysis is Cys-383. L-glutamine is bound by residues 384–387 (LGMQ), Glu-407, and Arg-464. Catalysis depends on residues His-509 and Glu-511.

This sequence belongs to the CTP synthase family. In terms of assembly, homotetramer.

It catalyses the reaction UTP + L-glutamine + ATP + H2O = CTP + L-glutamate + ADP + phosphate + 2 H(+). The enzyme catalyses L-glutamine + H2O = L-glutamate + NH4(+). The catalysed reaction is UTP + NH4(+) + ATP = CTP + ADP + phosphate + 2 H(+). Its pathway is pyrimidine metabolism; CTP biosynthesis via de novo pathway; CTP from UDP: step 2/2. Its activity is regulated as follows. Allosterically activated by GTP, when glutamine is the substrate; GTP has no effect on the reaction when ammonia is the substrate. The allosteric effector GTP functions by stabilizing the protein conformation that binds the tetrahedral intermediate(s) formed during glutamine hydrolysis. Inhibited by the product CTP, via allosteric rather than competitive inhibition. In terms of biological role, catalyzes the ATP-dependent amination of UTP to CTP with either L-glutamine or ammonia as the source of nitrogen. Regulates intracellular CTP levels through interactions with the four ribonucleotide triphosphates. This chain is CTP synthase, found in Porphyromonas gingivalis (strain ATCC 33277 / DSM 20709 / CIP 103683 / JCM 12257 / NCTC 11834 / 2561).